The chain runs to 264 residues: Acyl-[acyl-carrier-protein]--UDP-N-acetylglucosamine O-acyltransferase (264 aa).

Belongs to the transferase hexapeptide repeat family. LpxA subfamily. As to quaternary structure, homotrimer.

The protein localises to the cytoplasm. The catalysed reaction is a (3R)-hydroxyacyl-[ACP] + UDP-N-acetyl-alpha-D-glucosamine = a UDP-3-O-[(3R)-3-hydroxyacyl]-N-acetyl-alpha-D-glucosamine + holo-[ACP]. It functions in the pathway glycolipid biosynthesis; lipid IV(A) biosynthesis; lipid IV(A) from (3R)-3-hydroxytetradecanoyl-[acyl-carrier-protein] and UDP-N-acetyl-alpha-D-glucosamine: step 1/6. Functionally, involved in the biosynthesis of lipid A, a phosphorylated glycolipid that anchors the lipopolysaccharide to the outer membrane of the cell. This chain is Acyl-[acyl-carrier-protein]--UDP-N-acetylglucosamine O-acyltransferase, found in Chlorobium phaeobacteroides (strain DSM 266 / SMG 266 / 2430).